Consider the following 1263-residue polypeptide: Condensin complex subunit dpy-26 (1263 aa).

The segment covering 1–10 has biased composition (polar residues); that stretch reads MDVPSSSNVT. Positions 1–29 are disordered; the sequence is MDVPSSSNVTGRRKRQVLDDDEDDGFRST. Residues 691–725 are a coiled coil; sequence NEQMDETEVEERNEQDVQRELEDIALAADEVAELM. 2 disordered regions span residues 1098-1118 and 1225-1263; these read YQAA…GTAN and FSNL…EMEE. Polar residues predominate over residues 1106–1118; the sequence is NNQPTTSTYGTAN. Basic residues predominate over residues 1230 to 1241; that stretch reads RRPKAVPVRKGR.

In terms of assembly, component of the condensin I complex, which contains the mix-1/SMC2 and smc-4/SMC4 heterodimer, and three non SMC subunits that probably regulate the complex: dpy-26, capg-1 and dpy-28. Within the complex, interacts with dpy-28, mix-1, smc-4 and capg-1. Component of the dosage compensation complex, which consists of the condensin I-like components mix-1/SMC2 and dpy-27/SMC4, and the three non SMC subunits dpy-26, capg-1 and dpy-28. Within the complex, interacts with dpy-27, dpy-28, mix-1 and capg-1. The interaction with dpy-27 is required for dpy-27 protein stability. Interacts with smcl-1. In terms of tissue distribution, expressed in embryos and in somatic and germline tissues in L4 stage larvae (at protein level).

It localises to the nucleus. The protein resides in the chromosome. Its function is as follows. Required for both chromosome condensation and segregation and for X-chromosome dosage compensation depending on its binding partners. Member of the condensin I complex, a complex required for conversion of interphase chromatin into mitotic-like condense chromosomes and for proper chromosome segregation in mitosis and meiosis. As a member of the condensin I complex, further controls the crossover number and distribution in meiosis by restricting double strand break formation, probably by influencing higher-order chromosome structure. Plays a role in robust cytokinesis upon presence of chromatin obstructions. Also a member of the condensin I-like dosage compensation complex that associates specifically with hermaphrodite X chromosomes to reduce their gene transcription during interphase, possibly through chromatin reorganization. As a member of the dosage compensation complex, also binds to regulatory regions of the autosomal her-1 gene, required for male development, possibly contributing to its repression in hermaphrodites. This is Condensin complex subunit dpy-26 from Caenorhabditis elegans.